A 257-amino-acid chain; its full sequence is Ribosome-associated protein quality control protein P2 (257 aa).

Residues 1-74 (MSDIYQHFRK…RAERKRAILF (74 aa)) are N-terminal domain. A central region region spans residues 87–166 (LQAFNVRYAD…EKIDLSDLNI (80 aa)). In terms of domain architecture, S4 RNA-binding spans 181-251 (LRLDAVCASM…GKTKKDKWRV (71 aa)).

In the presence of chloramphenicol (a translation elongation inhibitor), but not erythromycin or lincomycin, associates with 50S ribosomal subunits with or without a tRNA in the P-site. The S4 domain binds in a similar position to RqcP.

The protein resides in the cytoplasm. Its function is as follows. Part of the ribosome quality control system (RQC), a ribosome-associated complex that mediates the extraction of incompletely synthesized nascent chains from stalled ribosomes and their subsequent degradation. RqcH recruits Ala-charged tRNA, and with RqcP directs the elongation of stalled nascent chains on 50S ribosomal subunits, leading to non-templated C-terminal alanine extensions (Ala tail). The Ala tail promotes nascent chain degradation. RqcP2 (YlmH) overexpression can compensate for RqcP's role in Ala tailing during RQC, restoring Ala tail addition to peptides in stalled ribosomes. Overexpression complements a double ssrA-rqcP double deletion, but not an ssrA-rqcH double deletion. In terms of biological role, the majority of tagged protein is associated with tRNA-less 50S subunits, suggesting it might also play a role in late stage 50S subunit biogenesis. In Bacillus subtilis (strain 168), this protein is Ribosome-associated protein quality control protein P2.